The primary structure comprises 216 residues: Cytidylate kinase (216 aa).

ATP is bound at residue 7–15; the sequence is GPSGTGKST.

This sequence belongs to the cytidylate kinase family. Type 1 subfamily.

The protein resides in the cytoplasm. It catalyses the reaction CMP + ATP = CDP + ADP. The catalysed reaction is dCMP + ATP = dCDP + ADP. This chain is Cytidylate kinase, found in Chlamydia caviae (strain ATCC VR-813 / DSM 19441 / 03DC25 / GPIC) (Chlamydophila caviae).